Consider the following 1407-residue polypeptide: YEATS domain-containing protein 2 (1407 aa).

K9 is covalently cross-linked (Glycyl lysine isopeptide (Lys-Gly) (interchain with G-Cter in SUMO2)). Positions 54–80 (MKNKEHEIDVIDQRLIEARRMMDKLRA) form a coiled coil. Residue K113 forms a Glycyl lysine isopeptide (Lys-Gly) (interchain with G-Cter in SUMO2) linkage. The tract at residues 116-196 (LESPSRSSSP…SHKRELRNAD (81 aa)) is disordered. Phosphoserine is present on residues S118, S120, and S157. A compositionally biased stretch (polar residues) spans 119–148 (PSRSSSPTNQRSETPSANHSESDSLSQHND). A compositionally biased stretch (basic and acidic residues) spans 149-165 (FLSDKDNNSNVDVEERP). K189 is covalently cross-linked (Glycyl lysine isopeptide (Lys-Gly) (interchain with G-Cter in SUMO2)). The 146-residue stretch at 201-346 (ETSRLFVKKT…EDSVYPQSSE (146 aa)) folds into the YEATS domain. Histone H3K27cr binding regions lie at residues 260-262 (HPS) and 283-285 (WGE). T406 carries the phosphothreonine modification. Residues S446, S462, S464, S470, and S472 each carry the phosphoserine modification. The segment at 462–540 (SGSPISTPSP…GTGSPIPKIH (79 aa)) is disordered. Position 477 is a phosphothreonine (T477). A Glycyl lysine isopeptide (Lys-Gly) (interchain with G-Cter in SUMO2) cross-link involves residue K486. The segment covering 511 to 520 (STPSTGSPTS) has biased composition (low complexity). Phosphoserine is present on S534. K550 participates in a covalent cross-link: Glycyl lysine isopeptide (Lys-Gly) (interchain with G-Cter in SUMO2). A Phosphoserine modification is found at S573. A Glycyl lysine isopeptide (Lys-Gly) (interchain with G-Cter in SUMO2) cross-link involves residue K590. The residue at position 625 (S625) is a Phosphoserine. Glycyl lysine isopeptide (Lys-Gly) (interchain with G-Cter in SUMO2) cross-links involve residues K647 and K771. The tract at residues 791 to 833 (SGSAAAGGSGSSGAGGGSGGGGGSGAGGTPSTSGPGGGPQHLT) is disordered. Over residues 795 to 829 (AAGGSGSSGAGGGSGGGGGSGAGGTPSTSGPGGGP) the composition is skewed to gly residues. K908 is covalently cross-linked (Glycyl lysine isopeptide (Lys-Gly) (interchain with G-Cter in SUMO2)). K1095 is covalently cross-linked (Glycyl lysine isopeptide (Lys-Gly) (interchain with G-Cter in SUMO1); alternate). Residue K1095 forms a Glycyl lysine isopeptide (Lys-Gly) (interchain with G-Cter in SUMO2); alternate linkage. Residue K1115 forms a Glycyl lysine isopeptide (Lys-Gly) (interchain with G-Cter in SUMO2) linkage. T1204 is subject to Phosphothreonine. Residues K1207 and K1270 each participate in a glycyl lysine isopeptide (Lys-Gly) (interchain with G-Cter in SUMO2) cross-link.

In terms of assembly, component of the ADA2A-containing complex (ATAC), composed of KAT14, KAT2A, TADA2L, TADA3L, ZZ3, MBIP, WDR5, YEATS2, SGF29 and DR1.

The protein resides in the nucleus. In terms of biological role, chromatin reader component of the ATAC complex, a complex with histone acetyltransferase activity on histones H3 and H4. YEATS2 specifically recognizes and binds histone H3 crotonylated at 'Lys-27' (H3K27cr). Crotonylation marks active promoters and enhancers and confers resistance to transcriptional repressors. This Mus musculus (Mouse) protein is YEATS domain-containing protein 2.